The chain runs to 949 residues: Protein translocase subunit SecA 1 (949 aa).

Residues Gln-86, 104-108, and Asp-493 contribute to the ATP site; that span reads GEGKT. The disordered stretch occupies residues 869–949; sequence VDGGARERAP…AKPPKSVKKR (81 aa). Basic and acidic residues predominate over residues 925–934; the sequence is SRRERREAAR.

Belongs to the SecA family. In terms of assembly, monomer and homodimer. Part of the essential Sec protein translocation apparatus which comprises SecA, SecYEG and auxiliary proteins SecDF. Other proteins may also be involved.

Its subcellular location is the cell membrane. It is found in the cytoplasm. It catalyses the reaction ATP + H2O + cellular proteinSide 1 = ADP + phosphate + cellular proteinSide 2.. Part of the Sec protein translocase complex. Interacts with the SecYEG preprotein conducting channel. Has a central role in coupling the hydrolysis of ATP to the transfer of proteins into and across the cell membrane, serving as an ATP-driven molecular motor driving the stepwise translocation of polypeptide chains across the membrane. This chain is Protein translocase subunit SecA 1, found in Mycobacterium bovis (strain ATCC BAA-935 / AF2122/97).